A 203-amino-acid chain; its full sequence is Holliday junction branch migration complex subunit RuvA (203 aa).

The interval 1–64 (MFAYFRGRLT…EDAFLLYGFS (64 aa)) is domain I. Positions 65–143 (SESERQLFRL…KMSPDGGKTI (79 aa)) are domain II. The interval 144–150 (ASGSGGN) is flexible linker. The domain III stretch occupies residues 151 to 203 (LALQIKDDALNALITLGFSKPAAQKAVTGILEGNPSLSVEEVVKSALVSIHNS).

It belongs to the RuvA family. As to quaternary structure, homotetramer. Forms an RuvA(8)-RuvB(12)-Holliday junction (HJ) complex. HJ DNA is sandwiched between 2 RuvA tetramers; dsDNA enters through RuvA and exits via RuvB. An RuvB hexamer assembles on each DNA strand where it exits the tetramer. Each RuvB hexamer is contacted by two RuvA subunits (via domain III) on 2 adjacent RuvB subunits; this complex drives branch migration. In the full resolvosome a probable DNA-RuvA(4)-RuvB(12)-RuvC(2) complex forms which resolves the HJ.

Its subcellular location is the cytoplasm. In terms of biological role, the RuvA-RuvB-RuvC complex processes Holliday junction (HJ) DNA during genetic recombination and DNA repair, while the RuvA-RuvB complex plays an important role in the rescue of blocked DNA replication forks via replication fork reversal (RFR). RuvA specifically binds to HJ cruciform DNA, conferring on it an open structure. The RuvB hexamer acts as an ATP-dependent pump, pulling dsDNA into and through the RuvAB complex. HJ branch migration allows RuvC to scan DNA until it finds its consensus sequence, where it cleaves and resolves the cruciform DNA. The protein is Holliday junction branch migration complex subunit RuvA of Chlorobium limicola (strain DSM 245 / NBRC 103803 / 6330).